Consider the following 253-residue polypeptide: LexA repressor (253 aa).

Residues 26-46 (FDEMKDALNLRSKSGIHRLIS) constitute a DNA-binding region (H-T-H motif). The tract at residues 73 to 97 (MPAATGKPPLAESGPPPVTAPATDE) is disordered. Active-site for autocatalytic cleavage activity residues include S174 and K212.

This sequence belongs to the peptidase S24 family. As to quaternary structure, homodimer.

It carries out the reaction Hydrolysis of Ala-|-Gly bond in repressor LexA.. Its function is as follows. Represses a number of genes involved in the response to DNA damage (SOS response), including recA and lexA. In the presence of single-stranded DNA, RecA interacts with LexA causing an autocatalytic cleavage which disrupts the DNA-binding part of LexA, leading to derepression of the SOS regulon and eventually DNA repair. The polypeptide is LexA repressor (Gluconacetobacter diazotrophicus (strain ATCC 49037 / DSM 5601 / CCUG 37298 / CIP 103539 / LMG 7603 / PAl5)).